Here is a 228-residue protein sequence, read N- to C-terminus: MSLYWTMFGHPSEQDIDEIESWFDWPISVYDFPRFRDVNVNSENPIIKVTTRSGGGNREEYEENNEYVSLLEGFICDKDASWDSTYAIFKYKIPDRSLDKWREYIERKKLELKKSQQISTKKINEDDENNKDNIDNNSASTIVDEFMKAFTKIHENIETEKILQNTDKSFSNTREIEFKQPSQEQSQQQLSNECVVKITELLDKAKISINDLNKTIEKLNETVNKYHG.

Residues 196–228 (VKITELLDKAKISINDLNKTIEKLNETVNKYHG) adopt a coiled-coil conformation.

This is an uncharacterized protein from Acanthamoeba polyphaga (Amoeba).